The following is a 222-amino-acid chain: Extracellular protein ARB_03106 (222 aa).

The signal sequence occupies residues Met-1 to Ala-18. 2 N-linked (GlcNAc...) asparagine glycosylation sites follow: Asn-113 and Asn-126.

Its subcellular location is the secreted. The chain is Extracellular protein ARB_03106 from Arthroderma benhamiae (strain ATCC MYA-4681 / CBS 112371) (Trichophyton mentagrophytes).